The sequence spans 1152 residues: Integrin alpha-M (1152 aa).

Residues methionine 1–glycine 16 form the signal peptide. Over phenylalanine 17–asparagine 1104 the chain is Extracellular. FG-GAP repeat units follow at residues asparagine 18 to proline 75 and isoleucine 76 to glutamine 135. A disulfide bridge connects residues cysteine 66 and cysteine 73. N-linked (GlcNAc...) asparagine glycosylation is present at asparagine 86. Cysteine 105 and cysteine 123 are disulfide-bonded. A VWFA domain is found at aspartate 150–leucine 328. Asparagine 240 carries an N-linked (GlcNAc...) asparagine glycan. FG-GAP repeat units lie at residues glutamine 339–isoleucine 390, asparagine 391–tryptophan 442, glutamate 443–tryptophan 503, aspartate 506–serine 564, and glutamine 569–arginine 629. Asparagine 391 is a glycosylation site (N-linked (GlcNAc...) asparagine). The Ca(2+) site is built by aspartate 465, aspartate 467, asparagine 469, aspartate 473, aspartate 529, asparagine 531, aspartate 533, aspartate 537, aspartate 592, aspartate 596, and aspartate 600. Residue asparagine 469 is glycosylated (N-linked (GlcNAc...) asparagine). The cysteines at positions 654 and 711 are disulfide-linked. Residues asparagine 692, asparagine 696, and asparagine 734 are each glycosylated (N-linked (GlcNAc...) asparagine). Residues cysteine 770 and cysteine 776 are joined by a disulfide bond. Asparagine 801 carries N-linked (GlcNAc...) asparagine glycosylation. Residues cysteine 847 and cysteine 864 are joined by a disulfide bond. Residues asparagine 880, asparagine 900, asparagine 911, asparagine 940, asparagine 946, asparagine 978, asparagine 993, and asparagine 1021 are each glycosylated (N-linked (GlcNAc...) asparagine). 2 disulfide bridges follow: cysteine 998/cysteine 1022 and cysteine 1027/cysteine 1032. N-linked (GlcNAc...) asparagine glycans are attached at residues asparagine 1044, asparagine 1050, and asparagine 1075. Residues proline 1105–tyrosine 1128 traverse the membrane as a helical segment. The Cytoplasmic portion of the chain corresponds to lysine 1129–glutamine 1152. A GFFKR motif motif is present at residues glycine 1131–arginine 1135.

Belongs to the integrin alpha chain family. Heterodimer of an alpha and a beta subunit. ITGAM associates with ITGB2. Found in a complex with CD177 and ITGB2/CD18. Interacts with JAM3. Interacts with THBD. Interacts with complement factor H/CFH; this interaction mediates adhesion of neutrophils to pathogens leading to pathogen clearance. Interacts with TMEM268; this interaction inhibits ITGAM degradation via the endosome-lysosome pathway. In terms of tissue distribution, predominantly expressed in monocytes and granulocytes. Expressed in neutrophils (at protein level).

The protein resides in the cell membrane. It is found in the membrane raft. Functionally, integrin ITGAM/ITGB2 is implicated in various adhesive interactions of monocytes, macrophages and granulocytes as well as in mediating the uptake of complement-coated particles and pathogens. It is identical with CR-3, the receptor for the iC3b fragment of the third complement component. It probably recognizes the R-G-D peptide in C3b. Integrin ITGAM/ITGB2 is also a receptor for fibrinogen, factor X and ICAM1. It recognizes P1 and P2 peptides of fibrinogen gamma chain. Regulates neutrophil migration. In association with beta subunit ITGB2/CD18, required for CD177-PRTN3-mediated activation of TNF primed neutrophils. May regulate phagocytosis-induced apoptosis in extravasated neutrophils. May play a role in mast cell development. Required with TYROBP/DAP12 in microglia to control production of microglial superoxide ions which promote the neuronal apoptosis that occurs during brain development. This is Integrin alpha-M (ITGAM) from Homo sapiens (Human).